Here is a 93-residue protein sequence, read N- to C-terminus: Pancreatic polypeptide prohormone (93 aa).

The N-terminal stretch at 1 to 29 (MPAACRCLFLLLLSACVALLLQPPLGTRG) is a signal peptide. At Tyr65 the chain carries Tyrosine amide. The propeptide occupies 89–93 (ELMDE).

It belongs to the NPY family.

It is found in the secreted. Hormone secreted by pancreatic cells that acts as a regulator of pancreatic and gastrointestinal functions probably by signaling through the G protein-coupled receptor NPY4R2. The chain is Pancreatic polypeptide prohormone (PPY) from Canis lupus familiaris (Dog).